The following is a 383-amino-acid chain: Succinate--CoA ligase [ADP-forming] subunit beta 2 (383 aa).

One can recognise an ATP-grasp domain in the interval 9–231; sequence RELFKEHGIV…QEDADSLEAR (223 aa). Residues Lys-45, 52–54, Cys-94, and Glu-99 contribute to the ATP site; that span reads GRG. Mg(2+) is bound by residues Asn-187 and Asp-201. Residues Asn-251 and 308-310 each bind substrate; that span reads GIT.

This sequence belongs to the succinate/malate CoA ligase beta subunit family. Heterotetramer of two alpha and two beta subunits. The cofactor is Mg(2+).

It catalyses the reaction succinate + ATP + CoA = succinyl-CoA + ADP + phosphate. The catalysed reaction is GTP + succinate + CoA = succinyl-CoA + GDP + phosphate. The protein operates within carbohydrate metabolism; tricarboxylic acid cycle; succinate from succinyl-CoA (ligase route): step 1/1. In terms of biological role, succinyl-CoA synthetase functions in the citric acid cycle (TCA), coupling the hydrolysis of succinyl-CoA to the synthesis of either ATP or GTP and thus represents the only step of substrate-level phosphorylation in the TCA. The beta subunit provides nucleotide specificity of the enzyme and binds the substrate succinate, while the binding sites for coenzyme A and phosphate are found in the alpha subunit. The chain is Succinate--CoA ligase [ADP-forming] subunit beta 2 from Streptomyces coelicolor (strain ATCC BAA-471 / A3(2) / M145).